Reading from the N-terminus, the 256-residue chain is C-8 sterol isomerase (256 aa).

The segment at 1–31 is disordered; that stretch reads MPPKKQSSSGGNKPSGSGSSSGRSSSGSSCR. Over residues 7 to 30 the composition is skewed to low complexity; sequence SSSGGNKPSGSGSSSGRSSSGSSC. The helical transmembrane segment at 40 to 60 threads the bilayer; it reads IGGWLKFFAILFALVAPIAYV.

The protein belongs to the ERG2 family.

The protein resides in the endoplasmic reticulum membrane. The protein operates within steroid metabolism; ergosterol biosynthesis; ergosterol from zymosterol: step 2/5. Functionally, catalyzes the reaction which results in unsaturation at C-7 in the B ring of sterols. This is C-8 sterol isomerase (erg-1) from Neurospora crassa (strain ATCC 24698 / 74-OR23-1A / CBS 708.71 / DSM 1257 / FGSC 987).